The following is a 355-amino-acid chain: Elongation factor Ts (355 aa).

An involved in Mg(2+) ion dislocation from EF-Tu region spans residues 82–85; the sequence is TDFV.

This sequence belongs to the EF-Ts family.

Its subcellular location is the cytoplasm. Functionally, associates with the EF-Tu.GDP complex and induces the exchange of GDP to GTP. It remains bound to the aminoacyl-tRNA.EF-Tu.GTP complex up to the GTP hydrolysis stage on the ribosome. The chain is Elongation factor Ts from Helicobacter acinonychis (strain Sheeba).